A 154-amino-acid polypeptide reads, in one-letter code: 6,7-dimethyl-8-ribityllumazine synthase (154 aa).

Residues Phe-15, 47–49 (TFD), and 71–73 (AVI) each bind 5-amino-6-(D-ribitylamino)uracil. A (2S)-2-hydroxy-3-oxobutyl phosphate-binding site is contributed by 76–77 (ET). Catalysis depends on His-79, which acts as the Proton donor. Leu-104 is a binding site for 5-amino-6-(D-ribitylamino)uracil. Arg-119 is a binding site for (2S)-2-hydroxy-3-oxobutyl phosphate.

The protein belongs to the DMRL synthase family.

The catalysed reaction is (2S)-2-hydroxy-3-oxobutyl phosphate + 5-amino-6-(D-ribitylamino)uracil = 6,7-dimethyl-8-(1-D-ribityl)lumazine + phosphate + 2 H2O + H(+). The protein operates within cofactor biosynthesis; riboflavin biosynthesis; riboflavin from 2-hydroxy-3-oxobutyl phosphate and 5-amino-6-(D-ribitylamino)uracil: step 1/2. Its function is as follows. Catalyzes the formation of 6,7-dimethyl-8-ribityllumazine by condensation of 5-amino-6-(D-ribitylamino)uracil with 3,4-dihydroxy-2-butanone 4-phosphate. This is the penultimate step in the biosynthesis of riboflavin. The sequence is that of 6,7-dimethyl-8-ribityllumazine synthase from Saccharolobus solfataricus (strain ATCC 35092 / DSM 1617 / JCM 11322 / P2) (Sulfolobus solfataricus).